We begin with the raw amino-acid sequence, 88 residues long: Small ribosomal subunit protein uS15 (88 aa).

Belongs to the universal ribosomal protein uS15 family. Part of the 30S ribosomal subunit. Forms a bridge to the 50S subunit in the 70S ribosome, contacting the 23S rRNA.

Functionally, one of the primary rRNA binding proteins, it binds directly to 16S rRNA where it helps nucleate assembly of the platform of the 30S subunit by binding and bridging several RNA helices of the 16S rRNA. In terms of biological role, forms an intersubunit bridge (bridge B4) with the 23S rRNA of the 50S subunit in the ribosome. This is Small ribosomal subunit protein uS15 from Albidiferax ferrireducens (strain ATCC BAA-621 / DSM 15236 / T118) (Rhodoferax ferrireducens).